The following is a 184-amino-acid chain: Glutathione-regulated potassium-efflux system ancillary protein KefG (184 aa).

The protein belongs to the NAD(P)H dehydrogenase (quinone) family. KefG subfamily. Interacts with KefB.

Its subcellular location is the cell inner membrane. The catalysed reaction is a quinone + NADH + H(+) = a quinol + NAD(+). It carries out the reaction a quinone + NADPH + H(+) = a quinol + NADP(+). In terms of biological role, regulatory subunit of a potassium efflux system that confers protection against electrophiles. Required for full activity of KefB. In Yersinia enterocolitica serotype O:8 / biotype 1B (strain NCTC 13174 / 8081), this protein is Glutathione-regulated potassium-efflux system ancillary protein KefG.